Reading from the N-terminus, the 132-residue chain is Large-conductance mechanosensitive channel (132 aa).

A run of 3 helical transmembrane segments spans residues 14-34, 38-58, and 67-87; these read VVDL…VSSL, IITP…LHFG, and GNFI…FMFV.

Belongs to the MscL family. As to quaternary structure, homopentamer.

It localises to the cell membrane. Functionally, channel that opens in response to stretch forces in the membrane lipid bilayer. May participate in the regulation of osmotic pressure changes within the cell. In Bacillus cereus (strain B4264), this protein is Large-conductance mechanosensitive channel.